The chain runs to 251 residues: Enolase-phosphatase E1 (251 aa).

Positions 13 and 15 each coordinate Mg(2+). Substrate is bound by residues 137 to 138 (SS) and lysine 183. Aspartate 210 serves as a coordination point for Mg(2+).

This sequence belongs to the HAD-like hydrolase superfamily. MasA/MtnC family. As to quaternary structure, monomer. Requires Mg(2+) as cofactor.

It localises to the cytoplasm. It is found in the nucleus. It catalyses the reaction 5-methylsulfanyl-2,3-dioxopentyl phosphate + H2O = 1,2-dihydroxy-5-(methylsulfanyl)pent-1-en-3-one + phosphate. Its pathway is amino-acid biosynthesis; L-methionine biosynthesis via salvage pathway; L-methionine from S-methyl-5-thio-alpha-D-ribose 1-phosphate: step 3/6. It functions in the pathway amino-acid biosynthesis; L-methionine biosynthesis via salvage pathway; L-methionine from S-methyl-5-thio-alpha-D-ribose 1-phosphate: step 4/6. Its function is as follows. Bifunctional enzyme that catalyzes the enolization of 2,3-diketo-5-methylthiopentyl-1-phosphate (DK-MTP-1-P) into the intermediate 2-hydroxy-3-keto-5-methylthiopentenyl-1-phosphate (HK-MTPenyl-1-P), which is then dephosphorylated to form the acireductone 1,2-dihydroxy-3-keto-5-methylthiopentene (DHK-MTPene). The polypeptide is Enolase-phosphatase E1 (Candida glabrata (strain ATCC 2001 / BCRC 20586 / JCM 3761 / NBRC 0622 / NRRL Y-65 / CBS 138) (Yeast)).